The chain runs to 229 residues: Cytochrome c oxidase subunit 2 (229 aa).

Topologically, residues 1-26 (MANWTQLGLQDASSPLMEELIYFHDY) are mitochondrial intermembrane. Residues 27–48 (TLIILTLITILVFYGLASLIVS) form a helical membrane-spanning segment. Residues 49–62 (SNTNRFFLEGQSLE) lie on the Mitochondrial matrix side of the membrane. The helical transmembrane segment at 63 to 82 (TIWTVIPAVILIFIALPSLQ) threads the bilayer. Topologically, residues 83–229 (LLYLIDEVNN…ENWVSNFLNE (147 aa)) are mitochondrial intermembrane. Residues histidine 161, cysteine 196, glutamate 198, cysteine 200, histidine 204, and methionine 207 each coordinate Cu cation. Mg(2+) is bound at residue glutamate 198.

The protein belongs to the cytochrome c oxidase subunit 2 family. As to quaternary structure, component of the cytochrome c oxidase (complex IV, CIV), a multisubunit enzyme composed of a catalytic core of 3 subunits and several supernumerary subunits. The complex exists as a monomer or a dimer and forms supercomplexes (SCs) in the inner mitochondrial membrane with ubiquinol-cytochrome c oxidoreductase (cytochrome b-c1 complex, complex III, CIII). Cu cation serves as cofactor.

The protein localises to the mitochondrion inner membrane. It carries out the reaction 4 Fe(II)-[cytochrome c] + O2 + 8 H(+)(in) = 4 Fe(III)-[cytochrome c] + 2 H2O + 4 H(+)(out). Component of the cytochrome c oxidase, the last enzyme in the mitochondrial electron transport chain which drives oxidative phosphorylation. The respiratory chain contains 3 multisubunit complexes succinate dehydrogenase (complex II, CII), ubiquinol-cytochrome c oxidoreductase (cytochrome b-c1 complex, complex III, CIII) and cytochrome c oxidase (complex IV, CIV), that cooperate to transfer electrons derived from NADH and succinate to molecular oxygen, creating an electrochemical gradient over the inner membrane that drives transmembrane transport and the ATP synthase. Cytochrome c oxidase is the component of the respiratory chain that catalyzes the reduction of oxygen to water. Electrons originating from reduced cytochrome c in the intermembrane space (IMS) are transferred via the dinuclear copper A center (CU(A)) of subunit 2 and heme A of subunit 1 to the active site in subunit 1, a binuclear center (BNC) formed by heme A3 and copper B (CU(B)). The BNC reduces molecular oxygen to 2 water molecules using 4 electrons from cytochrome c in the IMS and 4 protons from the mitochondrial matrix. The polypeptide is Cytochrome c oxidase subunit 2 (COII) (Pisaster ochraceus (Ochre sea star)).